Reading from the N-terminus, the 127-residue chain is MAQSVPPGDIQTQPNAKIVFNAPYDDKHTYHIKVINSSARRIGYGIKTTNMKRLGVDPPCGVLDPKEAVLLAVSCDAFAFGQEDTNNDRITVEWTNTPDGAAKQFRREWFQGDGMVRRKNLPIEYNP.

A2 bears the N-acetylalanine mark. One can recognise an MSP domain in the interval 9–126 (DIQTQPNAKI…RRKNLPIEYN (118 aa)).

As to expression, sperm.

It is found in the cell projection. It localises to the pseudopodium. The protein localises to the cytoplasm. The protein resides in the cytoskeleton. Its function is as follows. Central component in molecular interactions underlying sperm crawling. Forms an extensive filament system that extends from sperm villipoda, along the leading edge of the pseudopod. The polypeptide is Major sperm protein 10/36/56/76 (msp-10) (Caenorhabditis elegans).